A 110-amino-acid chain; its full sequence is Acylphosphatase (110 aa).

Residues 20–108 form the Acylphosphatase-like domain; sequence RAHIFVRGKV…GEFNDFSILP (89 aa). Residues Arg35 and Asn53 contribute to the active site.

It belongs to the acylphosphatase family.

It catalyses the reaction an acyl phosphate + H2O = a carboxylate + phosphate + H(+). The protein is Acylphosphatase (acyP) of Pyrobaculum calidifontis (strain DSM 21063 / JCM 11548 / VA1).